Here is a 44-residue protein sequence, read N- to C-terminus: Peptide Hact-4 (44 aa).

3 disulfide bridges follow: cysteine 8–cysteine 42, cysteine 15–cysteine 34, and cysteine 20–cysteine 43.

In terms of tissue distribution, expressed in tentacles.

It localises to the nematocyst. The protein localises to the secreted. Peptide with unknown function. Does not exhibit antimicrobial activity against Escherichia coli and Staphylococcus aureus. Does not exhibit any effect on human ion channel TRPV1 in a Xenopus laevis oocytes assay. In Heliofungia actiniformis (Mushroom coral), this protein is Peptide Hact-4.